Reading from the N-terminus, the 461-residue chain is tRNA modification GTPase MnmE (461 aa).

Positions 32, 89, and 128 each coordinate (6S)-5-formyl-5,6,7,8-tetrahydrofolate. The 164-residue stretch at 224 to 387 (GHALSIVGKP…LSQKISEFFP (164 aa)) folds into the TrmE-type G domain. Asn234 serves as a coordination point for K(+). GTP-binding positions include 234-239 (NAGKSS), 253-259 (SDIKGTT), and 278-281 (DTAG). Residue Ser238 coordinates Mg(2+). Residues Ser253, Ile255, and Thr258 each contribute to the K(+) site. Thr259 contributes to the Mg(2+) binding site. Lys461 lines the (6S)-5-formyl-5,6,7,8-tetrahydrofolate pocket.

It belongs to the TRAFAC class TrmE-Era-EngA-EngB-Septin-like GTPase superfamily. TrmE GTPase family. As to quaternary structure, homodimer. Heterotetramer of two MnmE and two MnmG subunits. K(+) serves as cofactor.

The protein resides in the cytoplasm. In terms of biological role, exhibits a very high intrinsic GTPase hydrolysis rate. Involved in the addition of a carboxymethylaminomethyl (cmnm) group at the wobble position (U34) of certain tRNAs, forming tRNA-cmnm(5)s(2)U34. The polypeptide is tRNA modification GTPase MnmE (Helicobacter pylori (strain J99 / ATCC 700824) (Campylobacter pylori J99)).